Consider the following 480-residue polypeptide: Protein nucleotidyltransferase YdiU (480 aa).

8 residues coordinate ATP: Gly87, Gly89, Arg90, Lys110, Asp122, Gly123, Arg173, and Arg180. The active-site Proton acceptor is the Asp249. Residues Asn250 and Asp259 each contribute to the Mg(2+) site. Position 259 (Asp259) interacts with ATP.

Belongs to the SELO family. Mg(2+) serves as cofactor. It depends on Mn(2+) as a cofactor.

The catalysed reaction is L-seryl-[protein] + ATP = 3-O-(5'-adenylyl)-L-seryl-[protein] + diphosphate. It catalyses the reaction L-threonyl-[protein] + ATP = 3-O-(5'-adenylyl)-L-threonyl-[protein] + diphosphate. The enzyme catalyses L-tyrosyl-[protein] + ATP = O-(5'-adenylyl)-L-tyrosyl-[protein] + diphosphate. It carries out the reaction L-histidyl-[protein] + UTP = N(tele)-(5'-uridylyl)-L-histidyl-[protein] + diphosphate. The catalysed reaction is L-seryl-[protein] + UTP = O-(5'-uridylyl)-L-seryl-[protein] + diphosphate. It catalyses the reaction L-tyrosyl-[protein] + UTP = O-(5'-uridylyl)-L-tyrosyl-[protein] + diphosphate. Its function is as follows. Nucleotidyltransferase involved in the post-translational modification of proteins. It can catalyze the addition of adenosine monophosphate (AMP) or uridine monophosphate (UMP) to a protein, resulting in modifications known as AMPylation and UMPylation. This Anoxybacillus flavithermus (strain DSM 21510 / WK1) protein is Protein nucleotidyltransferase YdiU.